A 290-amino-acid polypeptide reads, in one-letter code: Type II secretion system protein C (290 aa).

Residues 1–28 lie on the Cytoplasmic side of the membrane; it reads MTLPFRNDLLSSLLARCKTVPLSRFSQP. The chain crosses the membrane as a helical span at residues 29-46; sequence LFWLLLLLLAHQCAGLTW. At 47–290 the chain is on the periplasmic side; that stretch reads RLLDLGSQQA…LYDVYVGLSE (244 aa).

This sequence belongs to the GSP C family.

It is found in the cell inner membrane. Involved in a type II secretion system (T2SS, formerly general secretion pathway, GSP) for the export of proteins. The protein is Type II secretion system protein C (exeC) of Aeromonas hydrophila.